A 458-amino-acid chain; its full sequence is Monomethylamine methyltransferase MtmB1 (458 aa).

Pyrrolysine 202 is a non-standard amino acid (pyrrolysine).

This sequence belongs to the monomethylamine methyltransferase family.

The catalysed reaction is Co(I)-[methylamine-specific corrinoid protein] + methylamine + H(+) = methyl-Co(III)-[methylamine-specific corrinoid protein] + NH4(+). It functions in the pathway one-carbon metabolism; methanogenesis from methylamine. Functionally, catalyzes the transfer of the methyl group from monomethylamine to the corrinoid cofactor of MtmC. The protein is Monomethylamine methyltransferase MtmB1 (mtmB1) of Methanosarcina barkeri (strain Fusaro / DSM 804).